A 359-amino-acid polypeptide reads, in one-letter code: Peptide chain release factor 1 (359 aa).

The residue at position 236 (Q236) is an N5-methylglutamine.

The protein belongs to the prokaryotic/mitochondrial release factor family. Post-translationally, methylated by PrmC. Methylation increases the termination efficiency of RF1.

It localises to the cytoplasm. Peptide chain release factor 1 directs the termination of translation in response to the peptide chain termination codons UAG and UAA. This Streptococcus pyogenes serotype M6 (strain ATCC BAA-946 / MGAS10394) protein is Peptide chain release factor 1.